Consider the following 347-residue polypeptide: NADH-ubiquinone oxidoreductase chain 2 (347 aa).

10 helical membrane passes run 13-33, 59-79, 96-116, 122-142, 149-169, 178-198, 201-221, 247-267, 274-294, and 323-343; these read IILGTMIVMTSSHWLLVWIGF, YFLTQATASMLLMLAVVTNLL, AVMTLALVMKLGLSPFHFWVP, IPLSSGLVLLTWQKLAPLSVL, VSPTLLLTVSLMSIAVGGWGG, ILAYSSIAHMGWMTAVLAYNP, TLLNLTLYILMTTTTFLLFMF, IMLSLGGLPPLTGFLPKWMII, ESLLLPTLMAMMALLSLYFYM, and VPLLPPMITLFTLALPLAPAL.

The protein belongs to the complex I subunit 2 family. Core subunit of respiratory chain NADH dehydrogenase (Complex I) which is composed of 45 different subunits. Interacts with TMEM242.

Its subcellular location is the mitochondrion inner membrane. The catalysed reaction is a ubiquinone + NADH + 5 H(+)(in) = a ubiquinol + NAD(+) + 4 H(+)(out). Its function is as follows. Core subunit of the mitochondrial membrane respiratory chain NADH dehydrogenase (Complex I) which catalyzes electron transfer from NADH through the respiratory chain, using ubiquinone as an electron acceptor. Essential for the catalytic activity and assembly of complex I. The protein is NADH-ubiquinone oxidoreductase chain 2 of Megaderma spasma (Lesser false vampire bat).